Reading from the N-terminus, the 441-residue chain is tRNA-2-methylthio-N(6)-dimethylallyladenosine synthase (441 aa).

An MTTase N-terminal domain is found at 2–117 (KGLYIKSYGC…LPELLVKAHR (116 aa)). Positions 11, 47, 80, 157, 161, and 164 each coordinate [4Fe-4S] cluster. Residues 143 to 374 (KNQETSAFIS…QKLLREQQLA (232 aa)) form the Radical SAM core domain.

The protein belongs to the methylthiotransferase family. MiaB subfamily. In terms of assembly, monomer. The cofactor is [4Fe-4S] cluster.

The protein resides in the cytoplasm. The enzyme catalyses N(6)-dimethylallyladenosine(37) in tRNA + (sulfur carrier)-SH + AH2 + 2 S-adenosyl-L-methionine = 2-methylsulfanyl-N(6)-dimethylallyladenosine(37) in tRNA + (sulfur carrier)-H + 5'-deoxyadenosine + L-methionine + A + S-adenosyl-L-homocysteine + 2 H(+). Catalyzes the methylthiolation of N6-(dimethylallyl)adenosine (i(6)A), leading to the formation of 2-methylthio-N6-(dimethylallyl)adenosine (ms(2)i(6)A) at position 37 in tRNAs that read codons beginning with uridine. The protein is tRNA-2-methylthio-N(6)-dimethylallyladenosine synthase of Ehrlichia canis (strain Jake).